The following is a 136-amino-acid chain: Large ribosomal subunit protein uL16 (136 aa).

It belongs to the universal ribosomal protein uL16 family. In terms of assembly, part of the 50S ribosomal subunit.

Functionally, binds 23S rRNA and is also seen to make contacts with the A and possibly P site tRNAs. This chain is Large ribosomal subunit protein uL16, found in Mesomycoplasma hyopneumoniae (strain 232) (Mycoplasma hyopneumoniae).